The sequence spans 370 residues: Protein-tyrosine sulfotransferase 1 (370 aa).

The Cytoplasmic segment spans residues 1-8; the sequence is MVGKLKQN. Residues 9–25 form a helical; Signal-anchor for type II membrane protein membrane-spanning segment; it reads LLLACLVISSVTVFYLG. The Lumenal segment spans residues 26–370; it reads QHAMECHHRI…KEKPQTEQVE (345 aa). A glycan (N-linked (GlcNAc...) asparagine) is linked at Asn60. Residue 79-83 coordinates 3'-phosphoadenylyl sulfate; the sequence is RSGTT. Cys97 and Cys157 are disulfide-bonded. Residue Glu100 is the Proton donor/acceptor of the active site. Positions 102–106 are interaction with peptide substrate; the sequence is RVIPR. Arg184, Ser192, and Arg196 together coordinate 3'-phosphoadenylyl sulfate. A disulfide bridge connects residues Cys226 and Cys234. Position 239 (Tyr239) interacts with 3'-phosphoadenylyl sulfate. An N-linked (GlcNAc...) asparagine glycan is attached at Asn262. 3'-phosphoadenylyl sulfate is bound by residues 286–295 and Lys301; that span reads STDQVIKPVN.

The protein belongs to the protein sulfotransferase family. In terms of assembly, homodimer. Can also form heterodimers with TPST2. N-glycosylated.

Its subcellular location is the golgi apparatus membrane. The enzyme catalyses L-tyrosyl-[protein] + 3'-phosphoadenylyl sulfate = O-sulfo-L-tyrosine-[protein] + adenosine 3',5'-bisphosphate + H(+). In terms of biological role, catalyzes the O-sulfation of tyrosine residues within acidic motifs of polypeptides, using 3'-phosphoadenylyl sulfate (PAPS) as cosubstrate. This Rattus norvegicus (Rat) protein is Protein-tyrosine sulfotransferase 1 (Tpst1).